Reading from the N-terminus, the 194-residue chain is 3-isopropylmalate dehydratase small subunit (194 aa).

The protein belongs to the LeuD family. LeuD type 1 subfamily. As to quaternary structure, heterodimer of LeuC and LeuD.

It catalyses the reaction (2R,3S)-3-isopropylmalate = (2S)-2-isopropylmalate. It participates in amino-acid biosynthesis; L-leucine biosynthesis; L-leucine from 3-methyl-2-oxobutanoate: step 2/4. Functionally, catalyzes the isomerization between 2-isopropylmalate and 3-isopropylmalate, via the formation of 2-isopropylmaleate. In Anoxybacillus flavithermus (strain DSM 21510 / WK1), this protein is 3-isopropylmalate dehydratase small subunit.